The following is a 154-amino-acid chain: Protein Smg homolog (154 aa).

It belongs to the Smg family.

This chain is Protein Smg homolog, found in Aromatoleum aromaticum (strain DSM 19018 / LMG 30748 / EbN1) (Azoarcus sp. (strain EbN1)).